The following is a 673-amino-acid chain: Protein VirD3 (673 aa).

Disordered regions lie at residues 36–73 (VAGE…GRLG), 171–216 (SPVN…GTSV), 229–409 (ERDT…LRSS), 478–497 (RLNG…LEDF), 520–552 (EKGK…VTPL), and 585–673 (DSSR…GCGR). Polar residues-rich tracts occupy residues 171-183 (SPVN…SNWQ), 193-216 (VQPS…GTSV), 234-246 (SETT…TISS), and 268-277 (QSLSVTVTTP). The span at 278 to 287 (NSNAEASSHS) shows a compositional bias: low complexity. Residues 288 to 303 (AHTETLDDVSSDRSSE) show a composition bias toward basic and acidic residues. Basic and acidic residues-rich tracts occupy residues 520–534 (EKGK…DTRF) and 638–673 (AAEH…GCGR).

The sequence is that of Protein VirD3 (virD3) from Agrobacterium fabrum (strain C58 / ATCC 33970) (Agrobacterium tumefaciens (strain C58)).